The sequence spans 116 residues: PTS system cellobiose-specific EIIA component (116 aa).

The 99-residue stretch at 11–109 (DDYMGVVMGI…AVEVVGQEQR (99 aa)) folds into the PTS EIIA type-3 domain. Catalysis depends on His85, which acts as the Tele-phosphohistidine intermediate. His85 carries the phosphohistidine; by HPr modification. Asp88 is a binding site for Mg(2+).

Homotrimer. Mg(2+) serves as cofactor.

Functionally, the phosphoenolpyruvate-dependent sugar phosphotransferase system (sugar PTS), a major carbohydrate active transport system, catalyzes the phosphorylation of incoming sugar substrates concomitantly with their translocation across the cell membrane. Involved in cellobiose transport with PtcB and CelB. This system can also transport lactose. This is PTS system cellobiose-specific EIIA component from Lactococcus lactis subsp. lactis (strain IL1403) (Streptococcus lactis).